The sequence spans 351 residues: Ion-translocating oxidoreductase complex subunit D (351 aa).

4 helical membrane passes run 20 to 40 (IMLL…YFFG), 44 to 64 (LIQV…TLSL), 89 to 109 (LPPL…IIIA), and 123 to 143 (PAMI…TSWL). Thr187 is modified (FMN phosphoryl threonine). 5 helical membrane-spanning segments follow: residues 215–235 (LSGI…LFLL), 244–264 (IPVS…VIAP), 267–287 (FAPP…FFIA), 301–321 (LIFG…GGYP), and 322–342 (DGVA…DYYT).

It belongs to the NqrB/RnfD family. The complex is composed of six subunits: RnfA, RnfB, RnfC, RnfD, RnfE and RnfG. The cofactor is FMN.

It localises to the cell inner membrane. Its function is as follows. Part of a membrane-bound complex that couples electron transfer with translocation of ions across the membrane. In Pectobacterium carotovorum subsp. carotovorum (strain PC1), this protein is Ion-translocating oxidoreductase complex subunit D.